The chain runs to 303 residues: MDSSHVTESQGTLLFNEPLAEYTTWRVGGPAARLYKPANIDDLALFLSRLPFDEPLLWLGLGSNSLIRDGGFSGTVILTQGCLKEMTLLSDNCIRVEAGVSCASMARFSARNNLSEGEFWAGIPGTMGGALRMNAGCHGGETWQSVIEVQTINRRGEIRTRKPEEFEVAYRHVAGLGDEWFISAKLQLTPGNKETSLQLIKDLLAHRAKTQPTNEYNCGSVFRNPPGDFAARLIESCGLKGVSIGGAVVSEKHANFIINHQGTATAANIEALIHLVQTKVREQTSIELIREVHIIGDANVQTR.

The FAD-binding PCMH-type domain maps to 27 to 191; sequence VGGPAARLYK…ISAKLQLTPG (165 aa). The active site involves Arg171. Catalysis depends on Ser220, which acts as the Proton donor. Glu291 is a catalytic residue.

It belongs to the MurB family. It depends on FAD as a cofactor.

It localises to the cytoplasm. It carries out the reaction UDP-N-acetyl-alpha-D-muramate + NADP(+) = UDP-N-acetyl-3-O-(1-carboxyvinyl)-alpha-D-glucosamine + NADPH + H(+). Its pathway is cell wall biogenesis; peptidoglycan biosynthesis. In terms of biological role, cell wall formation. In Legionella pneumophila (strain Paris), this protein is UDP-N-acetylenolpyruvoylglucosamine reductase.